The following is a 1567-amino-acid chain: MAPRKKNPAIKSSGTTSSKASPLPDWVKGGGPKPPPSYTKAAKQQQTQSAGNDTAISATGSSSSSSPVAAASSAGGGGGGGQGQPREMLFPPGSKTPLNMLYERVNKLPGWEKPIVEPRRHKQGYSCAVTLKKVNKKDASNPFTVTFEPKEPTLRLECQSSLEAKHWGATYALFRIFNHLSLNLALPPGPREYWVKMEAYKKTAPSHQDWMWASDPFEAAAKRDAEKAKKEQDKLAAADAASRGEVSIINAKLNGAAKPLSKAWQEAKEVRLASSLREKIEATIRRAMSIFPSASAAPLDLVEEDQDADTAAPNSTPNIDAAGLEKELTSYGFRRGHARSAISWLTSARIALSNPSSSSTTAAALVDPMLASAASLADREAALEYLMLYTPEEDLPARFKPSTTSESFVTSSKAGASGDALAVGWAVDKLSKQAGLPRKAVQAVFKRIAAAEHERNVELPRLVKEGLALEMMLRQMAGWDSPAQAEEQWTSDAILDAVLFFPTRVNDADKEEIEIKRADERMAVEAVLGDDRVVVPSEHQRLGVQDYDVTIAGPGTSVGGTEDVRLRISSHPQALYPLARDKTHAVALPAFCVVSKTLPSYLKLALTQHLLRAFQGDNRRMDWYDAIEAGDGGIVLSLVEELESMWSKMIDDPPLLSSVMQYLVGPDSAESSVEATPETSRAATPTGPSRIANKRRTGGGRALRRDAEVDAQLQRQQRQLHTSPSYSKMDETRRSLPAASAAREILGLIRSNRVVIIAGETGCGKTTQVPQFILDEAIEAGRGSECNIVVTQPRRVSAIGVASRVAVERGEKLDGKKKAVAPGSLVGYAIRGERRASRECRLLFTTTGVLLRRLGAGGDTDLKGISHVVVDEVHERNVDSDFLLLELRELLRRNSRIKVVLMSATINQETFASYFGKAPCISIPGRTFAVEDHYLEDIVQQSGFRPSGNEWRGSARGGKQIEQEIGQLRAHLQAQGVDEETCKAVESLSRSGGRISYELLGAVVRYVVERAENEELSGAADGDVGGAILVFCPGVGEIRQAIDAITTSVRGQSKVEILPLHANLSADEQRRVFQPVGAGRRKIVVSTNVAETSITIPDVSYVVDTGRVKETRFEPESGLTRLVECWASRAACKQRRGRAGRVRAGECFRLYSRYVDEKKMAAQQTPEMRRVPLESLFLEVKSMREDEDVKEYLNKALDPPSLASMDAALTNLIEAGALQSDRGYKSRLTSLGKHLAQLPLDLRLAKLLIMGTIFGCLGPMLTVASIMSCKPLFNTPFEKREEASKARASFAAAGCRSDLLADAAAFEEWQTMRAQRKTNGEIREWCESHFISQSSLRDIQTNRLDLLSHLQEMGFVAPDYSAFGVYDDERYDMNAQHAGVLRSVILAGLWPAVVRIDVPSAKFDQSSSGTVQREAEARQVKYFDRNGRVFLHPSSTLFSCKGFESSYLTTFAKSSTGAGADSKVYLRDATEVPLFALLLFGGKLKINHFAGGIGIGSNQSGGDAKDENWVRLRANARIGVLCAQLRRLLDAVLDHAIDEPQDMFAVPGCKDVLSVIGQVLQRDGLAA.

2 disordered regions span residues 1 to 95 (MAPR…PGSK) and 670 to 734 (ESSV…ETRR). The span at 10 to 20 (IKSSGTTSSKA) shows a compositional bias: polar residues. 2 stretches are compositionally biased toward low complexity: residues 39-48 (TKAAKQQQTQ) and 55-73 (AISA…AASS). Residues 74 to 83 (AGGGGGGGQG) are compositionally biased toward gly residues. 2 stretches are compositionally biased toward polar residues: residues 670 to 687 (ESSV…TPTG) and 713 to 726 (LQRQ…SPSY). The Helicase ATP-binding domain maps to 746–924 (LGLIRSNRVV…FGKAPCISIP (179 aa)). An ATP-binding site is contributed by 759–766 (GETGCGKT). A DEAH box motif is present at residues 871 to 874 (DEVH). Residues 1003-1184 (VVRYVVERAE…SLFLEVKSMR (182 aa)) form the Helicase C-terminal domain.

This sequence belongs to the DEAD box helicase family. DEAH subfamily.

This chain is Putative DEAH-box ATP-dependent helicase UM11114, found in Mycosarcoma maydis (Corn smut fungus).